We begin with the raw amino-acid sequence, 565 residues long: Sulfite reductase [NADPH] hemoprotein beta-component (565 aa).

Cys-429, Cys-435, Cys-474, and Cys-478 together coordinate [4Fe-4S] cluster. Position 478 (Cys-478) interacts with siroheme.

Belongs to the nitrite and sulfite reductase 4Fe-4S domain family. As to quaternary structure, alpha(8)-beta(8). The alpha component is a flavoprotein, the beta component is a hemoprotein. Siroheme serves as cofactor. The cofactor is [4Fe-4S] cluster.

It catalyses the reaction hydrogen sulfide + 3 NADP(+) + 3 H2O = sulfite + 3 NADPH + 4 H(+). Its pathway is sulfur metabolism; hydrogen sulfide biosynthesis; hydrogen sulfide from sulfite (NADPH route): step 1/1. Functionally, component of the sulfite reductase complex that catalyzes the 6-electron reduction of sulfite to sulfide. This is one of several activities required for the biosynthesis of L-cysteine from sulfate. In Shewanella loihica (strain ATCC BAA-1088 / PV-4), this protein is Sulfite reductase [NADPH] hemoprotein beta-component.